The primary structure comprises 599 residues: Elongation factor 4 (599 aa).

One can recognise a tr-type G domain in the interval 2–184; the sequence is KNIRNFSIIA…RLVRDIPPPE (183 aa). Residues 14-19 and 131-134 each bind GTP; these read DHGKST and NKID.

This sequence belongs to the TRAFAC class translation factor GTPase superfamily. Classic translation factor GTPase family. LepA subfamily.

The protein localises to the cell inner membrane. It carries out the reaction GTP + H2O = GDP + phosphate + H(+). Required for accurate and efficient protein synthesis under certain stress conditions. May act as a fidelity factor of the translation reaction, by catalyzing a one-codon backward translocation of tRNAs on improperly translocated ribosomes. Back-translocation proceeds from a post-translocation (POST) complex to a pre-translocation (PRE) complex, thus giving elongation factor G a second chance to translocate the tRNAs correctly. Binds to ribosomes in a GTP-dependent manner. The sequence is that of Elongation factor 4 from Shigella dysenteriae serotype 1 (strain Sd197).